The chain runs to 117 residues: Large ribosomal subunit protein eL22 (117 aa).

Ser-49 and Ser-50 each carry phosphoserine.

The protein belongs to the eukaryotic ribosomal protein eL22 family. Component of the large ribosomal subunit (LSU). Mature yeast ribosomes consist of a small (40S) and a large (60S) subunit. The 40S small subunit contains 1 molecule of ribosomal RNA (18S rRNA) and at least 33 different proteins. The large 60S subunit contains 3 rRNA molecules (25S, 5.8S and 5S rRNA) and at least 46 different proteins.

Its subcellular location is the cytoplasm. It localises to the nucleus. The protein localises to the nucleolus. Functionally, component of the ribosome, a large ribonucleoprotein complex responsible for the synthesis of proteins in the cell. The small ribosomal subunit (SSU) binds messenger RNAs (mRNAs) and translates the encoded message by selecting cognate aminoacyl-transfer RNA (tRNA) molecules. The large subunit (LSU) contains the ribosomal catalytic site termed the peptidyl transferase center (PTC), which catalyzes the formation of peptide bonds, thereby polymerizing the amino acids delivered by tRNAs into a polypeptide chain. The nascent polypeptides leave the ribosome through a tunnel in the LSU and interact with protein factors that function in enzymatic processing, targeting, and the membrane insertion of nascent chains at the exit of the ribosomal tunnel. This is Large ribosomal subunit protein eL22 (rpl22) from Schizosaccharomyces pombe (strain 972 / ATCC 24843) (Fission yeast).